A 102-amino-acid polypeptide reads, in one-letter code: Small ribosomal subunit protein uS10 (102 aa).

Belongs to the universal ribosomal protein uS10 family. In terms of assembly, part of the 30S ribosomal subunit.

Its function is as follows. Involved in the binding of tRNA to the ribosomes. The polypeptide is Small ribosomal subunit protein uS10 (Staphylococcus aureus (strain JH9)).